The sequence spans 286 residues: ATP synthase gamma chain (286 aa).

This sequence belongs to the ATPase gamma chain family. F-type ATPases have 2 components, CF(1) - the catalytic core - and CF(0) - the membrane proton channel. CF(1) has five subunits: alpha(3), beta(3), gamma(1), delta(1), epsilon(1). CF(0) has three main subunits: a, b and c.

Its subcellular location is the cell inner membrane. Its function is as follows. Produces ATP from ADP in the presence of a proton gradient across the membrane. The gamma chain is believed to be important in regulating ATPase activity and the flow of protons through the CF(0) complex. This chain is ATP synthase gamma chain, found in Shewanella piezotolerans (strain WP3 / JCM 13877).